Reading from the N-terminus, the 388-residue chain is Tryptophan synthase beta chain (388 aa).

Lys86 carries the N6-(pyridoxal phosphate)lysine modification.

The protein belongs to the TrpB family. As to quaternary structure, tetramer of two alpha and two beta chains. Pyridoxal 5'-phosphate serves as cofactor.

The enzyme catalyses (1S,2R)-1-C-(indol-3-yl)glycerol 3-phosphate + L-serine = D-glyceraldehyde 3-phosphate + L-tryptophan + H2O. The protein operates within amino-acid biosynthesis; L-tryptophan biosynthesis; L-tryptophan from chorismate: step 5/5. In terms of biological role, the beta subunit is responsible for the synthesis of L-tryptophan from indole and L-serine. The chain is Tryptophan synthase beta chain (trpB) from Buchnera aphidicola subsp. Acyrthosiphon pisum (strain APS) (Acyrthosiphon pisum symbiotic bacterium).